Here is a 562-residue protein sequence, read N- to C-terminus: Tissue-type plasminogen activator (562 aa).

Positions Met1–Ala20 are cleaved as a signal peptide. Positions Leu21–Arg32 are excised as a propeptide. A propeptide spans Gly33–Arg35 (removed by plasmin). The 43-residue stretch at Val39–Val81 folds into the Fibronectin type-I domain. 17 disulfides stabilise this stretch: Cys41–Cys71, Cys69–Cys78, Cys86–Cys97, Cys91–Cys108, Cys110–Cys119, Cys127–Cys208, Cys148–Cys190, Cys179–Cys203, Cys215–Cys296, Cys236–Cys278, Cys267–Cys291, Cys299–Cys430, Cys342–Cys358, Cys350–Cys419, Cys444–Cys519, Cys476–Cys492, and Cys509–Cys537. The interval Arg42–Gln52 is important for binding to annexin A2. One can recognise an EGF-like domain in the interval Pro82 to Glu120. An O-linked (Fuc) threonine glycan is attached at Thr96. 2 consecutive Kringle domains span residues Thr126–Cys208 and Asp214–Cys296. The N-linked (GlcNAc...) asparagine glycan is linked to Asn152. The Peptidase S1 domain occupies Ile311–Arg561. Active-site charge relay system residues include His357 and Asp406. A glycan (N-linked (GlcNAc...) asparagine) is linked at Asn483. Catalysis depends on Ser513, which acts as the Charge relay system.

It belongs to the peptidase S1 family. As to quaternary structure, heterodimer of chain A and chain B held by a disulfide bond. Binds to fibrin with high affinity. This interaction leads to an increase in the catalytic efficiency of the enzyme due to an increase in affinity for plasminogen. Similarly, binding to heparin increases the activation of plasminogen. Binds to annexin A2, cytokeratin-8, fibronectin and laminin. Binds to mannose receptor and the low-density lipoprotein receptor-related protein (LRP1); these proteins are involved in TPA clearance. Binds LRP1B; binding is followed by internalization and degradation. Forms heterodimer with SERPINA5. Interacts with SERPINE1. In complex with SERPINE1, interacts with SORL1. In terms of processing, the single chain, almost fully active enzyme, can be further processed into a two-chain fully active form by a cleavage after Arg-310 catalyzed by plasmin, tissue kallikrein or factor Xa.

Its subcellular location is the secreted. It is found in the extracellular space. It carries out the reaction Specific cleavage of Arg-|-Val bond in plasminogen to form plasmin.. Inhibited by SERPINA5. Inhibited by SERPINE1. In terms of biological role, converts the abundant, but inactive, zymogen plasminogen to plasmin by hydrolyzing a single Arg-Val bond in plasminogen. By controlling plasmin-mediated proteolysis, it plays an important role in tissue remodeling and degradation, in cell migration and many other physiopathological events. During oocyte activation, plays a role in cortical granule reaction in the zona reaction, which contributes to the block to polyspermy. In Pongo abelii (Sumatran orangutan), this protein is Tissue-type plasminogen activator (PLAT).